A 51-amino-acid polypeptide reads, in one-letter code: Lantibiotic flavucin (51 aa).

Positions 1 to 20 are excised as a propeptide; it reads MSDFTLDFAEGDAADTVSPQ. The segment at residues 23-27 is a cross-link (lanthionine (Ser-Cys)); sequence SKSLC. 3 consecutive cross-links (beta-methyllanthionine (Thr-Cys)) follow at residues 28 to 31, 33 to 38, and 42 to 45; these read TPGC, TGWMMC, and TKGC.

The protein belongs to the type A lantibiotic family. In terms of processing, maturation of lantibiotics involves the enzymatic conversion of Thr, and Ser into dehydrated AA and the formation of thioether bonds with cysteine. This is followed by membrane translocation and cleavage of the modified precursor.

Its activity is regulated as follows. Antimicrobial activity depends on the dehydration degree and integrity of flavucin. Lanthionine-containing peptide antibiotic (lantibiotic) active on certain Gram-positive bacteria. The bactericidal activity of lantibiotics is based on depolarization of energized bacterial cytoplasmic membranes, initiated by the formation of aqueous transmembrane pores. Flavucin has high antimicrobial activity against several pathogenic bacteria such as S.aureus, E.faecalis, E.faecium and L.monocytogenes. Is also active against the Gram-negative P.aeruginosa. This is Lantibiotic flavucin from Corynebacterium lipophiloflavum (strain ATCC 700352 / DSM 44291 / CCUG 37336 / JCM 10383 / DMMZ 1944).